The chain runs to 454 residues: Mannosylfructose-phosphate synthase (454 aa).

This sequence belongs to the glycosyltransferase 1 family. Requires Mg(2+) as cofactor. Mn(2+) serves as cofactor.

It catalyses the reaction beta-D-fructose 6-phosphate + GDP-alpha-D-mannose = beta-D-fructofuranosyl alpha-D-mannopyranoside 6(F)-phosphate + GDP + H(+). The protein operates within carbohydrate metabolism; mannosylfructose biosynthesis; beta-D-fructofuranosyl alpha-D-mannopyranoside from D-fructose 6-phosphate and GDP-alpha-D-mannose: step 1/2. The sequence is that of Mannosylfructose-phosphate synthase from Agrobacterium fabrum (strain C58 / ATCC 33970) (Agrobacterium tumefaciens (strain C58)).